Consider the following 319-residue polypeptide: Aminoimidazole riboside kinase (319 aa).

3 residues coordinate 5-amino-1-(beta-D-ribosyl)imidazole: aspartate 16, glycine 31, and tyrosine 101. 158–160 (DVN) lines the ATP pocket. Residue arginine 162 coordinates 5-amino-1-(beta-D-ribosyl)imidazole. 3 residues coordinate K(+): alanine 180, alanine 181, and alanine 183. The ATP site is built by lysine 187 and glutamate 192. K(+) is bound at residue glycine 213. 220–225 (SLGADG) contacts ATP. Positions 246 and 248 each coordinate K(+). Residue aspartate 252 coordinates 5-amino-1-(beta-D-ribosyl)imidazole. The active-site Proton acceptor is aspartate 252. Asparagine 281 contacts ATP. K(+) is bound by residues alanine 287, alanine 290, and glycine 292.

Belongs to the carbohydrate kinase PfkB family. In terms of assembly, homodimer.

The catalysed reaction is 5-amino-1-(beta-D-ribosyl)imidazole + ATP = 5-amino-1-(5-phospho-beta-D-ribosyl)imidazole + ADP + H(+). Its activity is regulated as follows. Potassium may regulate kinase activity. Functionally, phosphorylates 5-amino-1-(beta-D-ribosyl)imidazole (AIRs) to form 5-amino-1-(5-phospho-beta-D-ribosyl)imidazole (AIR), an important intermediate in the purine and thiamine biosynthetic pathways. It allows the use of exogenous aminoimidazole riboside (AIRs) to satisfy the cellular requirement for purines and thiamine. This chain is Aminoimidazole riboside kinase, found in Salmonella typhimurium (strain LT2 / SGSC1412 / ATCC 700720).